A 375-amino-acid polypeptide reads, in one-letter code: FAD-dependent catabolic D-arginine dehydrogenase DauA (375 aa).

Residues Ala14, 32 to 33 (ER), 41 to 48 (STGRSAAH), Ala171, and 331 to 336 (GGYGIQ) contribute to the FAD site.

Belongs to the FAD-dependent glycerol-3-phosphate dehydrogenase family. Monomer. It depends on FAD as a cofactor.

The catalysed reaction is D-arginine + A + H2O = 5-guanidino-2-oxopentanoate + AH2 + NH4(+). It catalyses the reaction a D-alpha-amino acid + A + H2O = a 2-oxocarboxylate + AH2 + NH4(+). Inhibited by D-arginine and D-lysine at high concentration. In terms of biological role, dauA is highly expressed within the cystic fibrosis (CF) lung, and it is required for virulence via the optimal production of hydrogen cyanide, pyocyanine, pyoverdine, rhamnolipid and alginate during biofilm formation. Involved in the catabolism of D-lysine and D-arginine. Under aerobic conditions, the arginine succinyltransferase (AST) and arginine transaminase (ATA) pathways are 2 major routes for L-arginine utilization as the sole source of carbon and nitrogen. The D-to-L racemization of arginine by DauA and DauB is necessary, before to be channeled into the AST and/or ATA pathways. DauA catalyzes the flavin-dependent oxidative deamination of D-arginine into 2-ketoarginine (2-KA) and ammonia. It also has dehydrogenase activity towards D-lysine, D-tyrosine, D-methionine, D-phenylalanine, D-ornithine, D-histidine and D-leucine as substrates. The sequence is that of FAD-dependent catabolic D-arginine dehydrogenase DauA from Pseudomonas aeruginosa (strain ATCC 15692 / DSM 22644 / CIP 104116 / JCM 14847 / LMG 12228 / 1C / PRS 101 / PAO1).